The chain runs to 491 residues: Probable cytosol aminopeptidase (491 aa).

Positions 264 and 269 each coordinate Mn(2+). Residue K276 is part of the active site. Residues D287, D346, and E348 each contribute to the Mn(2+) site. Residue R350 is part of the active site.

Belongs to the peptidase M17 family. The cofactor is Mn(2+).

It is found in the cytoplasm. It catalyses the reaction Release of an N-terminal amino acid, Xaa-|-Yaa-, in which Xaa is preferably Leu, but may be other amino acids including Pro although not Arg or Lys, and Yaa may be Pro. Amino acid amides and methyl esters are also readily hydrolyzed, but rates on arylamides are exceedingly low.. It carries out the reaction Release of an N-terminal amino acid, preferentially leucine, but not glutamic or aspartic acids.. Its function is as follows. Presumably involved in the processing and regular turnover of intracellular proteins. Catalyzes the removal of unsubstituted N-terminal amino acids from various peptides. The protein is Probable cytosol aminopeptidase of Xylella fastidiosa (strain Temecula1 / ATCC 700964).